A 463-amino-acid polypeptide reads, in one-letter code: Flotillin-like protein 2 (463 aa).

A lipid anchor (S-palmitoyl cysteine) is attached at Cys35. The stretch at 305-354 (EYETKVQEANWELYNKQKQAEAVLYEKQKQAEAQKAEADATFYSKQKEAE) forms a coiled coil.

Belongs to the band 7/mec-2 family. Flotillin subfamily. Post-translationally, may be palmitoylated.

It is found in the cell membrane. Its subcellular location is the membrane. The protein localises to the caveola. Its function is as follows. May act as a scaffolding protein within caveolar membranes, functionally participating in formation of caveolae or caveolae-like vesicles. The protein is Flotillin-like protein 2 (FLOT2) of Arabidopsis thaliana (Mouse-ear cress).